The sequence spans 500 residues: L-arabinose isomerase (500 aa).

The Mn(2+) site is built by glutamate 306, glutamate 333, histidine 349, and histidine 448.

This sequence belongs to the arabinose isomerase family. Requires Mn(2+) as cofactor.

The enzyme catalyses beta-L-arabinopyranose = L-ribulose. Its pathway is carbohydrate degradation; L-arabinose degradation via L-ribulose; D-xylulose 5-phosphate from L-arabinose (bacterial route): step 1/3. Catalyzes the conversion of L-arabinose to L-ribulose. The chain is L-arabinose isomerase from Shewanella sp. (strain ANA-3).